Consider the following 399-residue polypeptide: Elongation factor Tu (399 aa).

A tr-type G domain is found at 10-209; that stretch reads KPHVNIGTIG…AVDEYIPEPT (200 aa). The G1 stretch occupies residues 19-26; sequence GHVDHGKT. A GTP-binding site is contributed by 19 to 26; the sequence is GHVDHGKT. T26 is a Mg(2+) binding site. A G2 region spans residues 60 to 64; the sequence is GITIA. The G3 stretch occupies residues 81 to 84; that stretch reads DCPG. Residues 81 to 85 and 136 to 139 contribute to the GTP site; these read DCPGH and NKED. A G4 region spans residues 136–139; it reads NKED. The interval 174–176 is G5; the sequence is SAK.

Belongs to the TRAFAC class translation factor GTPase superfamily. Classic translation factor GTPase family. EF-Tu/EF-1A subfamily. Monomer.

It localises to the cytoplasm. It carries out the reaction GTP + H2O = GDP + phosphate + H(+). Its function is as follows. GTP hydrolase that promotes the GTP-dependent binding of aminoacyl-tRNA to the A-site of ribosomes during protein biosynthesis. The sequence is that of Elongation factor Tu from Sulfurimonas denitrificans (strain ATCC 33889 / DSM 1251) (Thiomicrospira denitrificans (strain ATCC 33889 / DSM 1251)).